The sequence spans 115 residues: Small ribosomal subunit protein bS16 (115 aa).

Residues 81 to 115 (GLAPKPTYNEQPKKSAPKAKAQERAKAAADAAAAA) form a disordered region.

The protein belongs to the bacterial ribosomal protein bS16 family.

This chain is Small ribosomal subunit protein bS16, found in Gluconobacter oxydans (strain 621H) (Gluconobacter suboxydans).